A 56-amino-acid polypeptide reads, in one-letter code: Large ribosomal subunit protein bL33 (56 aa).

Belongs to the bacterial ribosomal protein bL33 family.

The protein is Large ribosomal subunit protein bL33 of Dichelobacter nodosus (strain VCS1703A).